We begin with the raw amino-acid sequence, 437 residues long: Transmembrane protein with metallophosphoesterase domain (437 aa).

The next 5 helical transmembrane spans lie at 7-27, 41-61, 87-107, 116-136, and 164-184; these read LSAEGKVGIASGVVFFSMLIS, ALLFRVQFLLFINSLLLLGSL, IIVLLFLALVHGSYLCMFFLV, LLSFSCLGVYVILLFFLFVFG, and VLALIITAVLAVYGLVNAAQP. Positions 211, 213, 243, 274, 376, and 378 each coordinate a divalent metal cation.

The protein belongs to the metallophosphoesterase superfamily. LOC643853 family. Requires a divalent metal cation as cofactor.

Its subcellular location is the membrane. The chain is Transmembrane protein with metallophosphoesterase domain (tmppe) from Danio rerio (Zebrafish).